Reading from the N-terminus, the 1021-residue chain is Disease resistance protein Pikm2-TS (1021 aa).

A structured coiled coil (CC) domain region spans residues 1-182 (MELVVGASEA…PQIIGIKEPV (182 aa)). The NB-ARC domain occupies 186-519 (TVMEELEVWL…WIAEGFANEK (334 aa)). The disordered stretch occupies residues 297 to 317 (PENDGNPDNTPIRLQETTDDD). LRR repeat units lie at residues 612–634 (LAQVRSLTVFGNLNHVPFHSFNY), 659–682 (MLLLKYLSIRRTEISKIPSKIQKL), and 683–705 (EYLETLDIRETYVRDLPKSIVQL). Residues 719-751 (RKGLRLPQEKSKKPIKNPSPQGKTKEPAKKGFL) are disordered. LRR repeat units lie at residues 785–807 (LTGLRKLAIYKLNITKGGDTFKQ), 817–841 (SCGLQTLAINDENSEFINSLGDMPA), 843–865 (PRYLVALELSGKLEKLPKWITSI), 866–888 (TTLNKLTISVTVLRTETLEILHI), 912–935 (KDILENNKLDSDGEIVIPAEGFKS), and 957–981 (MPALEIIEMRFKDFEGLFGIEILEN).

This sequence belongs to the disease resistance NB-LRR family. As to expression, constitutively expressed.

In terms of biological role, disease resistance (R) protein. Resistance proteins guard the plant against pathogens that contain an appropriate avirulence protein via an indirect interaction with this avirulence protein. That triggers a defense system including the hypersensitive response, which restricts the pathogen growth. Contribution of Pikm-1 is required to recognize the effector avirulence protein AVR-Pik. In Oryza sativa subsp. japonica (Rice), this protein is Disease resistance protein Pikm2-TS.